The sequence spans 906 residues: Protein translocase subunit SecA (906 aa).

ATP contacts are provided by residues Q86, 104 to 108 (GEGKT), and D499. The Zn(2+) site is built by C890, C892, C901, and H902.

The protein belongs to the SecA family. Monomer and homodimer. Part of the essential Sec protein translocation apparatus which comprises SecA, SecYEG and auxiliary proteins SecDF-YajC and YidC. Zn(2+) is required as a cofactor.

It localises to the cell inner membrane. It is found in the cytoplasm. The catalysed reaction is ATP + H2O + cellular proteinSide 1 = ADP + phosphate + cellular proteinSide 2.. Part of the Sec protein translocase complex. Interacts with the SecYEG preprotein conducting channel. Has a central role in coupling the hydrolysis of ATP to the transfer of proteins into and across the cell membrane, serving both as a receptor for the preprotein-SecB complex and as an ATP-driven molecular motor driving the stepwise translocation of polypeptide chains across the membrane. The protein is Protein translocase subunit SecA of Rickettsia prowazekii (strain Madrid E).